The chain runs to 628 residues: tRNA uridine 5-carboxymethylaminomethyl modification enzyme MnmG (628 aa).

FAD-binding positions include G14 to G19, V126, and S181. G273–F287 serves as a coordination point for NAD(+). Residue Q370 participates in FAD binding.

This sequence belongs to the MnmG family. In terms of assembly, homodimer. Heterotetramer of two MnmE and two MnmG subunits. Requires FAD as cofactor.

The protein resides in the cytoplasm. NAD-binding protein involved in the addition of a carboxymethylaminomethyl (cmnm) group at the wobble position (U34) of certain tRNAs, forming tRNA-cmnm(5)s(2)U34. The chain is tRNA uridine 5-carboxymethylaminomethyl modification enzyme MnmG from Bacillus subtilis (strain 168).